The chain runs to 192 residues: Fe/S biogenesis protein NfuA (192 aa).

Residues C149 and C152 each contribute to the [4Fe-4S] cluster site.

Belongs to the NfuA family. As to quaternary structure, homodimer. [4Fe-4S] cluster is required as a cofactor.

In terms of biological role, involved in iron-sulfur cluster biogenesis. Binds a 4Fe-4S cluster, can transfer this cluster to apoproteins, and thereby intervenes in the maturation of Fe/S proteins. Could also act as a scaffold/chaperone for damaged Fe/S proteins. The polypeptide is Fe/S biogenesis protein NfuA (Tolumonas auensis (strain DSM 9187 / NBRC 110442 / TA 4)).